Here is a 966-residue protein sequence, read N- to C-terminus: Polycystin-2 (966 aa).

Residues 1-106 are disordered; that stretch reads MVNSRRVQPQ…DDDEVEGEEG (106 aa). Topologically, residues 1 to 217 are cytoplasmic; sequence MVNSRRVQPQ…NANREKYLKS (217 aa). Gly residues predominate over residues 30–44; that stretch reads VAGGAGLAVPGGLGE. The span at 46–56 shows a compositional bias: basic and acidic residues; sequence RGLEIEMERIR. Residues 58–79 show a composition bias toward low complexity; sequence AAARDPPAGASASPSPPLSSCS. Ser-72 and Ser-76 each carry phosphoserine. The segment covering 91–105 has biased composition (acidic residues); sequence EAEEDDDDDEVEGEE. Omega-N-methylarginine is present on Arg-135. The segment at 147–179 is disordered; that stretch reads HLSGRRRRLEDQGAQCPSPAGGGDPLHRHLPLE. A helical membrane pass occupies residues 218–239; sequence VLRELVTYLFFLVVLCILTYGM. Over 240–466 the chain is Extracellular; that stretch reads MSSNVYYYTR…PVKLIRYVTA (227 aa). Residues Asn-297, Asn-303, and Asn-326 are each glycosylated (N-linked (GlcNAc...) asparagine). A disulfide bridge links Cys-329 with Cys-342. Asn-360 and Asn-373 each carry an N-linked (GlcNAc...) asparagine glycan. The helical transmembrane segment at 467 to 487 threads the bilayer; the sequence is FDFFLAACEIIFCFFIIYYVV. Over 488–503 the chain is Cytoplasmic; it reads EEILEIRIHRLSYFRS. The chain crosses the membrane as a helical span at residues 504 to 524; sequence FWNCLDVVIVVLSVVAMVINI. Residues 525–550 are Extracellular-facing; sequence YRMSNAEGLLQFLEDQNSFPNFEHVA. Residues 551-571 traverse the membrane as a helical segment; the sequence is YWQIQFNNISAVMVFLVWIKL. Position 555 (Gln-555) interacts with cholesterol. The Cytoplasmic segment spans residues 572–595; sequence FKFINFNRTMSQLSTTMSRCAKDL. Residues 596–617 traverse the membrane as a helical segment; sequence FGFTIMFSIIFLAYAQLAYLVF. The Extracellular segment spans residues 618–629; that stretch reads GTQVDDFSTFQE. An intramembrane region (pore-forming) is located at residues 630–644; sequence CIFTQFRIILGDINF. Leu-639 contacts Ca(2+). The Selectivity filter motif lies at 639–641; it reads LGD. The Extracellular portion of the chain corresponds to 645 to 652; that stretch reads AEIEEANR. The chain crosses the membrane as a helical span at residues 653-673; it reads VLGPLYFTTFVFFMFFILLNM. At 674–966 the chain is on the cytoplasmic side; that stretch reads FLAIINDSYS…GGNGSANVHA (293 aa). The EF-hand domain occupies 748-783; the sequence is HTDAEIEAIFTKYDQDGDQELTEREHQQMRDDLEKE. Asp-761, Asp-763, Asp-765, Glu-767, and Glu-772 together coordinate Ca(2+). Residues 764–828 are disordered; sequence GDQELTEREH…GHSSRRRGSI (65 aa). Basic and acidic residues predominate over residues 768 to 793; the sequence is LTEREHQQMRDDLEKEREDLDLEHSS. Residues 794–805 show a composition bias toward low complexity; that stretch reads LPRPMSSRSFPR. Phosphoserine is present on residues Ser-799, Ser-806, Ser-810, and Ser-827. Residues 801 to 820 are linker; sequence RSFPRSLDDSEEEDDEDSGH. An important for interaction with PACS1 and PACS2 region spans residues 808-819; that stretch reads DDSEEEDDEDSG. Residues 831–870 adopt a coiled-coil conformation; sequence GVSYEEFQVLVRRVDRMEHSIGSIVSKIDAVIVKLEIMER. The disordered stretch occupies residues 914 to 966; sequence WESDDAASQTGHGVSTQVGLGGQPHPRNPRPPSSQSAEGLEGGGGNGSANVHA. Over residues 919–931 the composition is skewed to polar residues; that stretch reads AASQTGHGVSTQV.

It belongs to the polycystin family. In terms of assembly, homotetramer. Component of the heterotetrameric polycystin channel complex with PKD1; the tetramer contains one PKD1 chain and three PKD2 chains. Interaction with PKD1 is required for ciliary localization. Isoform 1 interacts with PKD1 while isoform 3 does not. Interacts with PKD1L1. Interacts with CD2AP. Interacts with HAX1. Interacts with NEK8. Part of a complex containing AKAP5, ADCY5, ADCY6 and PDE4C. Interacts (via C-terminus) with TRPV4 (via C-terminus). Interacts (via C-terminal acidic region) with PACS1 and PACS2; these interactions retain the protein in the endoplasmic reticulum and prevent trafficking to the cell membrane. Interacts with TMEM33; enhancing its opening at the ER membrane. Interacts with TMEM120A; TMEM120A inhibits PKD2 channel activity through the physical association of PKD2 with TMEM120A. Interacts (via N-terminus) with RYR2; regulates RYR2 channel activity. Post-translationally, N-glycosylated. The four subunits in a tetramer probably differ in the extent of glycosylation; simultaneous glycosylation of all experimentally validated sites would probably create steric hindrance. In terms of processing, sumoylated by SUMO1; sumoylation regulates PKD2 membrane recycling and is necessary for intravascular pressure-induced arterial contractility. Phosphorylated. Phosphorylation is important for protein function; a mutant that lacks the N-terminal phosphorylation sites cannot complement a zebrafish pkd2-deficient mutant. PKD-mediated phosphorylation at the C-terminus regulates its function in the release of Ca(2+) stores from the endoplasmic reticulum. Phosphorylation at Ser-810 regulates PKD2 trafficking. Phosphorylation at Ser-72 is required for PKD2 trafficking to or retention at the lateral plasma membrane. Phosphorylation at Ser-799, Ser-810 and Ser-827 regulates PKD2 channel activity. In terms of tissue distribution, detected in kidney epithelium (at protein level). Highly expressed on basolateral membranes in distal convoluted tubules and medullary thick ascending limbs of Henle. Detected at much lower levels in cortical and medullary collecting tubules, and not detected in the glomerular tuft, in thin limbs of Henle, interstitium and blood vessels (at protein level). Expressed in mesenchymally derived structures in the developing embryo at day 12.5. Isoform 1 is predominantly expressed in kidney at all developmental stages with high levels also detected in lung. Isoform 3 shows highest expression in brain with lower expression in kidney and lung, low levels in thymus and is hardly detectable in liver.

Its subcellular location is the cell projection. It is found in the cilium membrane. The protein resides in the cell membrane. The protein localises to the basolateral cell membrane. It localises to the cytoplasmic vesicle membrane. Its subcellular location is the endoplasmic reticulum membrane. It is found in the golgi apparatus. The protein resides in the vesicle. The protein localises to the secreted. It localises to the extracellular exosome. The catalysed reaction is K(+)(in) = K(+)(out). It carries out the reaction Na(+)(in) = Na(+)(out). It catalyses the reaction Ca(2+)(in) = Ca(2+)(out). With respect to regulation, channel activity is regulated by phosphorylation. The channel is activated by increased cytoplasmic Ca(2+) (in the uM range) and by membrane depolarization. TMEM120A inhibits the channel activity of PKD2, and mediates mechanosensitivity of the PKD2-TMEM120A channel complex. At the endoplasmic reticulum membrane (ER), TMEM33 enhances its channel activity. PKD1/ PKD2 complex on the plasma membrane is activated by PKD1 N-terminus. In terms of biological role, forms a nonselective cation channel. Can function as a homotetrameric ion channel or can form heteromer with PKD1. Displays distinct function depending on its subcellular localization and regulation by its binding partners. Functions as a cation channel, with a preference for monovalent cations over divalent cations that allows K(+), Na(+) and Ca(2+) influx, with low selectivity for Ca(2+). Involved in fluid-flow mechanosensation by the primary cilium in renal epithelium. In the endoplasmic reticulum, likely functions as a K(+) channel to facilitate Ca(2+) release. The heterotetrameric PKD1/PKD2 channel has higher Ca(2+) permeability than homomeric PKD2 channel and acts as a primarily Ca(2+)-permeable channel. PKD1 and PKD2 may function through a common signaling pathway that is necessary to maintain the normal, differentiated state of renal tubule cells. Interacts with and acts as a regulator of a number of other channels, such as TRPV4, TRPC1, IP3R, RYR2, ultimately further affecting intracellular signaling, to modulate intracellular Ca(2+) signaling. Together with TRPV4, forms mechano- and thermosensitive channels in cilium. In cardiomyocytes, PKD2 modulates Ca(2+) release from stimulated RYR2 receptors through direct association. Also involved in left-right axis specification via its role in sensing nodal flow; forms a complex with PKD1L1 in cilia to facilitate flow detection in left-right patterning. Acts as a regulator of cilium length together with PKD1. Mediates systemic blood pressure and contributes to the myogenic response in cerebral arteries though vasoconstriction. This is Polycystin-2 from Mus musculus (Mouse).